A 488-amino-acid chain; its full sequence is Glutamyl-tRNA(Gln) amidotransferase subunit A (488 aa).

Catalysis depends on charge relay system residues K78 and S153. Residue S177 is the Acyl-ester intermediate of the active site.

Belongs to the amidase family. GatA subfamily. Heterotrimer of A, B and C subunits.

The catalysed reaction is L-glutamyl-tRNA(Gln) + L-glutamine + ATP + H2O = L-glutaminyl-tRNA(Gln) + L-glutamate + ADP + phosphate + H(+). Its function is as follows. Allows the formation of correctly charged Gln-tRNA(Gln) through the transamidation of misacylated Glu-tRNA(Gln) in organisms which lack glutaminyl-tRNA synthetase. The reaction takes place in the presence of glutamine and ATP through an activated gamma-phospho-Glu-tRNA(Gln). In Solidesulfovibrio magneticus (strain ATCC 700980 / DSM 13731 / RS-1) (Desulfovibrio magneticus), this protein is Glutamyl-tRNA(Gln) amidotransferase subunit A.